A 352-amino-acid chain; its full sequence is DNA polymerase IV (352 aa).

The 181-residue stretch at 6–186 folds into the UmuC domain; it reads IIHIDMDAFY…LPLGKIPGVG (181 aa). Mg(2+)-binding residues include Asp10 and Asp104. The active site involves Glu105.

This sequence belongs to the DNA polymerase type-Y family. In terms of assembly, monomer. Requires Mg(2+) as cofactor.

It is found in the cytoplasm. The catalysed reaction is DNA(n) + a 2'-deoxyribonucleoside 5'-triphosphate = DNA(n+1) + diphosphate. Functionally, poorly processive, error-prone DNA polymerase involved in untargeted mutagenesis. Copies undamaged DNA at stalled replication forks, which arise in vivo from mismatched or misaligned primer ends. These misaligned primers can be extended by PolIV. Exhibits no 3'-5' exonuclease (proofreading) activity. May be involved in translesional synthesis, in conjunction with the beta clamp from PolIII. This Neisseria meningitidis serogroup A / serotype 4A (strain DSM 15465 / Z2491) protein is DNA polymerase IV.